The primary structure comprises 447 residues: Probable glycine dehydrogenase (decarboxylating) subunit 1 (447 aa).

Belongs to the GcvP family. N-terminal subunit subfamily. The glycine cleavage system is composed of four proteins: P, T, L and H. In this organism, the P 'protein' is a heterodimer of two subunits.

The catalysed reaction is N(6)-[(R)-lipoyl]-L-lysyl-[glycine-cleavage complex H protein] + glycine + H(+) = N(6)-[(R)-S(8)-aminomethyldihydrolipoyl]-L-lysyl-[glycine-cleavage complex H protein] + CO2. In terms of biological role, the glycine cleavage system catalyzes the degradation of glycine. The P protein binds the alpha-amino group of glycine through its pyridoxal phosphate cofactor; CO(2) is released and the remaining methylamine moiety is then transferred to the lipoamide cofactor of the H protein. The polypeptide is Probable glycine dehydrogenase (decarboxylating) subunit 1 (Bacillus cytotoxicus (strain DSM 22905 / CIP 110041 / 391-98 / NVH 391-98)).